A 347-amino-acid chain; its full sequence is Microneme protein 21 (347 aa).

Its subcellular location is the cytoplasmic vesicle. It localises to the secretory vesicle. The protein resides in the microneme. It is found in the secreted. This chain is Microneme protein 21, found in Toxoplasma gondii.